The following is a 176-amino-acid chain: MSHASDTLVMGKIGAPYGVKGWVKITSYTDELDGIFSYTPWLVGQEGNTKEIVVDQWRTHNKGLVAKLVGVETRDDAESIKNLDISIKAQQLPQLDGDEFYWRELVGMQVVTEQGYNLGVVKELFETGANDVMLIKANLKDAFGQKERMVPYLIDQVVKKVDREAKTIQVDWDPSF.

Positions 97 to 176 (GDEFYWRELV…TIQVDWDPSF (80 aa)) constitute a PRC barrel domain.

Belongs to the RimM family. In terms of assembly, binds ribosomal protein uS19.

The protein resides in the cytoplasm. Functionally, an accessory protein needed during the final step in the assembly of 30S ribosomal subunit, possibly for assembly of the head region. Essential for efficient processing of 16S rRNA. May be needed both before and after RbfA during the maturation of 16S rRNA. It has affinity for free ribosomal 30S subunits but not for 70S ribosomes. This Pseudoalteromonas atlantica (strain T6c / ATCC BAA-1087) protein is Ribosome maturation factor RimM.